Here is a 404-residue protein sequence, read N- to C-terminus: Lissencephaly-1 homolog (404 aa).

Residues 7-39 (QKEEINRAIAEYMQNNGYSESFSVFLKESSLSE) enclose the LisH domain. The stretch at 54 to 81 (TTVLRLQRKVNDLESKLQESQREINHGA) forms a coiled coil. Residues 69–89 (KLQESQREINHGAPTRDKRQA) show a composition bias toward basic and acidic residues. The segment at 69-90 (KLQESQREINHGAPTRDKRQAA) is disordered. WD repeat units follow at residues 104 to 145 (GHRL…RTLK), 146 to 185 (GHTDAVNDIAIDAAGKQLVSCSSDLSIKLWDFGQTYDCLK), 189 to 228 (GHEHTVSSVTFLPTGDFVLSASRDHTIKQWDISTGYCVYT), 231 to 270 (GHNDWVRMIRISNDGTLFASASLDQTVTVWSFATKSAKLV), 273 to 327 (DHEH…VLFT), 330 to 369 (AHENWVRGLAFHPKGKYLISVADDKTLRVWELSAQRCMKA), and 372 to 404 (AHEHFVSTVAFHQTSPFVITGSVDMSCKVWECR).

Belongs to the WD repeat LIS1/nudF family. As to quaternary structure, component of a dynein-regulating complex composed of at least lis-1 and nud-2. Interacts with nud-2; the interaction is direct. In terms of tissue distribution, expressed in all classes of neurons in the ventral cord. Expressed in the multinucleate spermathecal valves and adult seam cells.

It localises to the cytoplasm. The protein resides in the cytoskeleton. It is found in the microtubule organizing center. Its subcellular location is the centrosome. The protein localises to the chromosome. It localises to the centromere. The protein resides in the kinetochore. It is found in the nucleus envelope. Its function is as follows. Positively regulates the activity of the minus-end directed microtubule motor protein dynein. May enhance dynein-mediated microtubule sliding by targeting dynein to the microtubule plus end. Required for several dynein- and microtubule-dependent processes such as nuclear migration during cell division. Part of a complex with nud-2, which is recruited to the nuclear envelope by unc-83, where, in turn, it recruits dynein to the nuclear surface and regulates nuclear migration in hypodermal precursor cells. Plays a role in GABAergic synaptic vesicle localization in the ventral nerve cord. Required for neuronal cell differentiation. This is Lissencephaly-1 homolog from Caenorhabditis elegans.